The chain runs to 263 residues: Glycerol uptake facilitator protein (263 aa).

The Cytoplasmic portion of the chain corresponds to 1 to 7 (MNIYRKK). Residues 8–36 (NIIKKCFMEFFGTGLVMFFGIGCLAASKL) traverse the membrane as a helical segment. Residues 37–41 (TNANF) lie on the Extracellular side of the membrane. The chain crosses the membrane as a helical span at residues 42 to 62 (TQFEISCIWGFGVSIAIYFSS). Topologically, residues 63–65 (SIS) are cytoplasmic. Residues 66 to 69 (GAHL) lie within the membrane without spanning it. Residues 70–72 (NPA) carry the NPA 1 motif. Positions 70 to 80 (NPAVTIFFWLS) form an intramembrane region, helical. Over 81 to 86 (SKLNKR) the chain is Cytoplasmic. A helical transmembrane segment spans residues 87 to 110 (KVLPYIISQTLGSFFFTMLTYYLY). Residues 111 to 145 (NNLLISFERNNNVVRGTQESLNLASIFCVYPNYNN) lie on the Extracellular side of the membrane. The helical transmembrane segment at 146–171 (SFIYDFIIEIFSTALFILIVLEFNNR) threads the bilayer. At 172-181 (NSNYFLYNRS) the chain is on the cytoplasmic side. A helical transmembrane segment spans residues 182 to 198 (VAPILTGFLVCMINLVI). The Extracellular portion of the chain corresponds to 199-202 (NPLN). An intramembrane segment occupies 203–206 (NISL). The short motif at 207-209 (NPA) is the NPA 2 element. Residues 207-220 (NPARDLGPKILLSL) constitute an intramembrane region (helical). Residues 221–236 (TGWGLFSFTGGNDNIL) lie on the Extracellular side of the membrane. Residues 237 to 259 (YCFIPIMGPILGANLGGWIHKTL) traverse the membrane as a helical segment. At 260–263 (INNS) the chain is on the cytoplasmic side.

It belongs to the MIP/aquaporin (TC 1.A.8) family.

Its subcellular location is the cell membrane. The enzyme catalyses glycerol(in) = glycerol(out). In terms of biological role, mediates glycerol diffusion across the cytoplasmic membrane via a pore-type mechanism. In Buchnera aphidicola subsp. Acyrthosiphon pisum (strain APS) (Acyrthosiphon pisum symbiotic bacterium), this protein is Glycerol uptake facilitator protein (glpF).